A 324-amino-acid polypeptide reads, in one-letter code: MNGAGEINASRHRKENELKTCQILGAPVQSGASQPGCLMGPDAFRTAGLTQVLTELGWAVTDLGDATPTVEPELSHPNSAVKNLDALVGWTRSLSQKALEMARSCDLPVFLGGDHSMSAGTVSGVAQRTAELGKEQFVLWLDAHTDLHTLHTTASGNLHGTPVAYYTGQSGFEGLPPLAAPVNPRNVSMMGIRSVDPEERRRVAEIGVQVADMRVLDEQGVVRPLEAFLDRVSKVSGRLHVSLDVDFLDPAIAPAVGTTVPGGATFREAHLIMEMLHDSGLVTSLDLAELNPFLDERGRTARLITDLASSLFGRRVFDRVTTAF.

4 residues coordinate Mn(2+): His115, Asp142, His144, and Asp146. Residues 144–148 (HTDLH), 155–157 (SGN), and Asp196 contribute to the substrate site. 2 residues coordinate Mn(2+): Asp244 and Asp246. Residues Thr258 and Glu289 each coordinate substrate.

The protein belongs to the arginase family. Homohexamer. The cofactor is Mn(2+).

It catalyses the reaction L-arginine + H2O = urea + L-ornithine. The protein operates within nitrogen metabolism; urea cycle; L-ornithine and urea from L-arginine: step 1/1. This is Arginase (arcA) from Agrobacterium fabrum (strain C58 / ATCC 33970) (Agrobacterium tumefaciens (strain C58)).